The following is a 37-amino-acid chain: Cytochrome b6-f complex subunit 5 (37 aa).

Residues L5–A25 form a helical membrane-spanning segment.

It belongs to the PetG family. The 4 large subunits of the cytochrome b6-f complex are cytochrome b6, subunit IV (17 kDa polypeptide, PetD), cytochrome f and the Rieske protein, while the 4 small subunits are PetG, PetL, PetM and PetN. The complex functions as a dimer.

Its subcellular location is the plastid. The protein resides in the chloroplast thylakoid membrane. Its function is as follows. Component of the cytochrome b6-f complex, which mediates electron transfer between photosystem II (PSII) and photosystem I (PSI), cyclic electron flow around PSI, and state transitions. PetG is required for either the stability or assembly of the cytochrome b6-f complex. The chain is Cytochrome b6-f complex subunit 5 from Chara vulgaris (Common stonewort).